Here is a 539-residue protein sequence, read N- to C-terminus: Tripartite motif-containing protein 26 (539 aa).

Residues 16-57 (CSICLDYLRDPVTIDCGHVFCRSCTTDVRPISGSRPVCPLCK) form an RING-type zinc finger. The segment at 97–138 (QDAKLCERHREKLHYYCEDDGKLLCVMCRESREHRPHTAVLM) adopts a B box-type zinc-finger fold. Positions 102, 105, 124, and 130 each coordinate Zn(2+). Positions 188–227 (IVAEFEQGHQFLREREEHLLEQLAKLEQELTEGREKFKSR) form a coiled coil. Positions 295–539 (RGLREFQGKL…WPGTRLLLRP (245 aa)) constitute a B30.2/SPRY domain. Positions 376–437 (REGWSEDEEE…EEEEEVLESC (62 aa)) are disordered. Residues 380–434 (SEDEEEGDEEEEGEEEEEEEEAGYGDGYDDWETDEDEESLGDEEEEEEEEEEEVL) are compositionally biased toward acidic residues.

The protein belongs to the TRIM/RBCC family. As to quaternary structure, interacts with TBK1; this interaction bridges together TBK1 and NEMO in order to activate TBK1. Interacts with INCA1. Autoubiquitinates upon viral infection. In turn, autoubiquitinated TRIM26 recruits NEMO and bridges TBK1-NEMO interaction.

The protein localises to the cytoplasm. Its subcellular location is the nucleus. The enzyme catalyses S-ubiquitinyl-[E2 ubiquitin-conjugating enzyme]-L-cysteine + [acceptor protein]-L-lysine = [E2 ubiquitin-conjugating enzyme]-L-cysteine + N(6)-ubiquitinyl-[acceptor protein]-L-lysine.. Functionally, E3 ubiquitin-protein ligase which regulates the IFN-beta production and antiviral response downstream of various DNA-encoded pattern-recognition receptors (PRRs). Also plays a central role in determining the response to different forms of oxidative stress by controlling levels of DNA glycosylases NEIL1, NEIL3 and NTH1 that are involved in repair of damaged DNA. Promotes nuclear IRF3 ubiquitination and proteasomal degradation. Bridges together TBK1 and NEMO during the innate response to viral infection leading to the activation of TBK1. Positively regulates LPS-mediated inflammatory innate immune response by catalyzing the 'Lys-11'-linked polyubiquitination of TAB1 to enhance its activation and subsequent NF-kappa-B and MAPK signaling. In a manner independent of its catalytic activity, inhibits WWP2, a SOX2-directed E3 ubiquitin ligase, and thus protects SOX2 from polyubiquitination and proteasomal degradation. Ubiquitinates the histone acetyltransferase protein complex component PHF20 and thereby triggers its degradation in the nucleus after its recruitment by the histone demethylase KDM6B, serving as a scaffold protein. Upon induction by TGF-beta, ubiquitinates the TFIID component TAF7 for proteasomal degradation. Induces ferroptosis by ubiquitinating SLC7A11, a critical protein for lipid reactive oxygen species (ROS) scavenging. Inhibits directly hepatitis B virus replication by mediating HBX ubiquitination and subsequent degradation. (Microbial infection) Promotes herpes simplex virus type 2/HHV-2 infection in vaginal epithelial cells by decreasing the nuclear localization of IRF3, the primary mediator of type I interferon activation. The chain is Tripartite motif-containing protein 26 (TRIM26) from Homo sapiens (Human).